The chain runs to 282 residues: Parvulin-like PPIase (282 aa).

Positions 1–20 are cleaved as a signal peptide; sequence MKKLSVIFLSVSMLSSIAFC. Residues 138 to 231 enclose the PpiC domain; the sequence is KEQIKVAHIL…FGWHIIKVLE (94 aa).

This sequence belongs to the PpiC/parvulin rotamase family.

It is found in the cell outer membrane. The enzyme catalyses [protein]-peptidylproline (omega=180) = [protein]-peptidylproline (omega=0). This is Parvulin-like PPIase (plp) from Rickettsia typhi (strain ATCC VR-144 / Wilmington).